A 471-amino-acid polypeptide reads, in one-letter code: UDP-N-acetylmuramate--L-alanine ligase (471 aa).

Residue 114–120 (GTHGKTT) coordinates ATP.

This sequence belongs to the MurCDEF family.

The protein resides in the cytoplasm. It carries out the reaction UDP-N-acetyl-alpha-D-muramate + L-alanine + ATP = UDP-N-acetyl-alpha-D-muramoyl-L-alanine + ADP + phosphate + H(+). Its pathway is cell wall biogenesis; peptidoglycan biosynthesis. Functionally, cell wall formation. The polypeptide is UDP-N-acetylmuramate--L-alanine ligase (Rhizobium etli (strain ATCC 51251 / DSM 11541 / JCM 21823 / NBRC 15573 / CFN 42)).